Reading from the N-terminus, the 60-residue chain is Conotoxin VnMRCL-012 (60 aa).

A signal peptide spans 1–22 (MRCLPVFVILLLLIASAPGVDA). The propeptide occupies 23-50 (QPKTKYDVPLASRHDFAKKTPKRLSKPR).

Belongs to the conotoxin T superfamily. Post-translationally, contains 2 disulfide bonds that can be either 'C1-C3, C2-C4' or 'C1-C4, C2-C3', since these disulfide connectivities have been observed for conotoxins with cysteine framework V (for examples, see AC P0DQQ7 and AC P81755). Expressed by the venom duct.

The protein localises to the secreted. The sequence is that of Conotoxin VnMRCL-012 from Conus ventricosus (Mediterranean cone).